The sequence spans 561 residues: Mercuric reductase (561 aa).

Residues 1–65 (MTTLKITGMT…AVAGLGYEAT (65 aa)) form the HMA domain. Positions 11 and 14 each coordinate a metal cation. FAD is bound by residues Ala-110, Gly-130, and Thr-135. A disulfide bond links Cys-136 and Cys-141. Residues Lys-145, Ala-211, Asp-403, and Val-411 each coordinate FAD. Residues Cys-558 and Cys-559 each coordinate Hg(2+).

It belongs to the class-I pyridine nucleotide-disulfide oxidoreductase family. Homodimer. It depends on FAD as a cofactor.

The enzyme catalyses Hg + NADP(+) + H(+) = Hg(2+) + NADPH. Functionally, resistance to Hg(2+) in bacteria appears to be governed by a specialized system which includes mercuric reductase. MerA protein is responsible for volatilizing mercury as Hg(0). The sequence is that of Mercuric reductase (merA) from Acinetobacter calcoaceticus.